The sequence spans 118 residues: Histone H4 (118 aa).

The disordered stretch occupies residues 1 to 39; the sequence is MATDTGSGRGKGGKGVTLGKGSKGAKASKGGKRIRTKTQ. The span at 7–22 shows a compositional bias: gly residues; it reads SGRGKGGKGVTLGKGS.

Belongs to the histone H4 family. In terms of assembly, the nucleosome is a histone octamer containing two molecules each of H2A, H2B, H3 and H4 assembled in one H3-H4 heterotetramer and two H2A-H2B heterodimers. The octamer wraps approximately 147 bp of DNA.

The protein resides in the nucleus. It is found in the chromosome. Core component of nucleosome. Nucleosomes wrap and compact DNA into chromatin, limiting DNA accessibility to the cellular machineries which require DNA as a template. Histones thereby play a central role in transcription regulation, DNA repair, DNA replication and chromosomal stability. DNA accessibility is regulated via a complex set of post-translational modifications of histones, also called histone code, and nucleosome remodeling. This Entamoeba histolytica (strain ATCC 30459 / HM-1:IMSS / ABRM) protein is Histone H4.